The sequence spans 101 residues: Integration host factor subunit beta (101 aa).

The segment at 58 to 101 is disordered; the sequence is ARAGRNPRTGAHVPVDQKSVPFFKTGKEMRERLNRDTGAPDSGA. The segment covering 82-92 has biased composition (basic and acidic residues); that stretch reads TGKEMRERLNR.

Belongs to the bacterial histone-like protein family. In terms of assembly, heterodimer of an alpha and a beta chain.

This protein is one of the two subunits of integration host factor, a specific DNA-binding protein that functions in genetic recombination as well as in transcriptional and translational control. The sequence is that of Integration host factor subunit beta from Rhodopseudomonas palustris (strain BisB18).